A 268-amino-acid polypeptide reads, in one-letter code: Glucosamine-6-phosphate deaminase (268 aa).

Residue Asp72 is the Proton acceptor; for enolization step of the active site. Residue Asp141 is the For ring-opening step of the active site. His143 functions as the Proton acceptor; for ring-opening step in the catalytic mechanism. The active-site For ring-opening step is the Glu148.

The protein belongs to the glucosamine/galactosamine-6-phosphate isomerase family. NagB subfamily.

It catalyses the reaction alpha-D-glucosamine 6-phosphate + H2O = beta-D-fructose 6-phosphate + NH4(+). It functions in the pathway amino-sugar metabolism; N-acetylneuraminate degradation; D-fructose 6-phosphate from N-acetylneuraminate: step 5/5. Allosterically activated by N-acetylglucosamine 6-phosphate (GlcNAc6P). Its function is as follows. Catalyzes the reversible isomerization-deamination of glucosamine 6-phosphate (GlcN6P) to form fructose 6-phosphate (Fru6P) and ammonium ion. The chain is Glucosamine-6-phosphate deaminase from Borreliella afzelii (strain PKo) (Borrelia afzelii).